The following is a 520-amino-acid chain: 2-isopropylmalate synthase (520 aa).

Residues 12 to 274 (VVIFDTTLRD…WCNVESTMLT (263 aa)) form the Pyruvate carboxyltransferase domain. Mn(2+)-binding residues include D21, H209, H211, and N245. The segment at 398–520 (KLTSLTVIAG…RDVPSAAAAS (123 aa)) is regulatory domain.

This sequence belongs to the alpha-IPM synthase/homocitrate synthase family. LeuA type 1 subfamily. As to quaternary structure, homodimer. Mn(2+) is required as a cofactor.

Its subcellular location is the cytoplasm. The enzyme catalyses 3-methyl-2-oxobutanoate + acetyl-CoA + H2O = (2S)-2-isopropylmalate + CoA + H(+). It functions in the pathway amino-acid biosynthesis; L-leucine biosynthesis; L-leucine from 3-methyl-2-oxobutanoate: step 1/4. Its function is as follows. Catalyzes the condensation of the acetyl group of acetyl-CoA with 3-methyl-2-oxobutanoate (2-ketoisovalerate) to form 3-carboxy-3-hydroxy-4-methylpentanoate (2-isopropylmalate). This Nitrobacter hamburgensis (strain DSM 10229 / NCIMB 13809 / X14) protein is 2-isopropylmalate synthase.